A 163-amino-acid chain; its full sequence is Nucleotide-binding protein MUL_0671 (163 aa).

Belongs to the YajQ family.

In terms of biological role, nucleotide-binding protein. The chain is Nucleotide-binding protein MUL_0671 from Mycobacterium ulcerans (strain Agy99).